Reading from the N-terminus, the 337-residue chain is Glyceraldehyde-3-phosphate dehydrogenase (337 aa).

NAD(+)-binding positions include R12–I13, D34, and R79. D-glyceraldehyde 3-phosphate-binding positions include S150 to T152, T181, T210 to G211, and R233. Catalysis depends on C151, which acts as the Nucleophile. Residue N315 participates in NAD(+) binding.

Belongs to the glyceraldehyde-3-phosphate dehydrogenase family. In terms of assembly, homotetramer.

The protein localises to the cytoplasm. The enzyme catalyses D-glyceraldehyde 3-phosphate + phosphate + NAD(+) = (2R)-3-phospho-glyceroyl phosphate + NADH + H(+). It participates in carbohydrate degradation; glycolysis; pyruvate from D-glyceraldehyde 3-phosphate: step 1/5. This chain is Glyceraldehyde-3-phosphate dehydrogenase (GPD), found in Coccidioides immitis (strain RS) (Valley fever fungus).